Reading from the N-terminus, the 393-residue chain is METFLYTSESVNEGHPDKLCDQISDAVLDACLEQDPDSKVACETCTKTNMVMVFGEITTKANVDYEKIVRNTCRNIGFVSDDVGLDADNCKVLVNIEQQSPDIAQGVHGHLTKRPEEIGAGDQGHMFGYATDETPELMPLSHVLATKLGARLTEVRKNGTCPWLRPDGKTQVTVEYYNDKGAMVPIRVHTVLISTQHDETVTNDEIAADLKEHVIKPVIPEKYLDEKTIFHLNPSGRFVIGGPHGDAGLTGRKIIIDTYGGWGAHGGGAFSGKDPTKVDRSGAYIVRQAAKSIVANGLARRCLVQVSYAIGVPEPLSVFVDSYGTGKIPDKEILKIVKENFDFRPGMISIHLDLKRGGNGRFLKTAAYGHFGREDPDFTWETVKPLKWEKPQA.

Glu-9 lines the Mg(2+) pocket. His-15 provides a ligand contact to ATP. Asp-17 contributes to the Mg(2+) binding site. Glu-43 is a binding site for K(+). The L-methionine site is built by Glu-56 and Gln-99. ATP is bound by residues 167–169, 235–238, Asp-246, 252–253, Ala-269, Lys-273, and Lys-277; these read DGK, SGRF, and RK. An L-methionine-binding site is contributed by Asp-246. Lys-277 serves as a coordination point for L-methionine.

The protein belongs to the AdoMet synthase family. As to quaternary structure, homotetramer; dimer of dimers. Requires Mn(2+) as cofactor. The cofactor is Mg(2+). Co(2+) serves as cofactor. It depends on K(+) as a cofactor.

The protein resides in the cytoplasm. The enzyme catalyses L-methionine + ATP + H2O = S-adenosyl-L-methionine + phosphate + diphosphate. The protein operates within amino-acid biosynthesis; S-adenosyl-L-methionine biosynthesis; S-adenosyl-L-methionine from L-methionine: step 1/1. Increased activity in the presence of 25 percent acetonitrile, methanol or dimethylformamide. Functionally, catalyzes the formation of S-adenosylmethionine from methionine and ATP. This chain is S-adenosylmethionine synthase, found in Acacia koa (Koa tree).